Consider the following 146-residue polypeptide: Regulator of ribonuclease activity B (146 aa).

Residues 110–146 are disordered; that stretch reads WGTYFEDPDGEEEEGDEFDQDDEDGPADRDEVPATRH. A compositionally biased stretch (acidic residues) spans 115-134; it reads EDPDGEEEEGDEFDQDDEDG. The segment covering 135 to 146 has biased composition (basic and acidic residues); sequence PADRDEVPATRH.

The protein belongs to the RraB family. Interacts with the C-terminal region of Rne.

It localises to the cytoplasm. Globally modulates RNA abundance by binding to RNase E (Rne) and regulating its endonucleolytic activity. Can modulate Rne action in a substrate-dependent manner by altering the composition of the degradosome. The protein is Regulator of ribonuclease activity B of Sodalis glossinidius (strain morsitans).